The sequence spans 308 residues: 4-hydroxyproline 2-epimerase (308 aa).

Cys-88 (proton acceptor) is an active-site residue. Residues 89–90 (GH), His-208, and Asp-232 contribute to the substrate site. Cys-236 (proton donor) is an active-site residue. Position 237–238 (237–238 (GT)) interacts with substrate.

It belongs to the proline racemase family.

It carries out the reaction trans-4-hydroxy-L-proline = cis-4-hydroxy-D-proline. Its function is as follows. Catalyzes the reversible epimerization of cis-4-hydroxy-D-proline (c4DHyp) to trans-4-hydroxy-L-proline (t4LHyp). May be involved in a degradation pathway that allows P.putida strain KT2440 to grow on either epimer of 4-hydroxyproline, c4DHyp and t4LHyp, as the sole carbon and nitrogen source. Does not exhibit measureable racemase activity in vitro with any of the 19 natural chiral amino acid enantiomers. This is 4-hydroxyproline 2-epimerase from Pseudomonas putida (strain ATCC 47054 / DSM 6125 / CFBP 8728 / NCIMB 11950 / KT2440).